Here is a 1451-residue protein sequence, read N- to C-terminus: Glutamate receptor ionotropic, NMDA 2A (1451 aa).

Residues 1-20 form the signal peptide; sequence MGMFVLLLYTFLYAGDLGHG. At 21 to 547 the chain is on the extracellular side; sequence AEKSFPVLNI…PSAFLEPFSA (527 aa). The N-linked (GlcNAc...) asparagine glycan is linked to Asn67. A disulfide bridge connects residues Cys79 and Cys312. 3 residues coordinate Zn(2+): His120, Asp258, and Asp274. Residues Asn332, Asn372, Asn435, and Asn436 are each glycosylated (N-linked (GlcNAc...) asparagine). Disulfide bonds link Cys421/Cys447 and Cys428/Cys448. Residues Ser503, Thr505, and Arg510 each contribute to the L-glutamate site. Residue Asn533 is glycosylated (N-linked (GlcNAc...) asparagine). A helical transmembrane segment spans residues 548 to 568; that stretch reads SVWVMMFVMLLLVSAMAVFIF. The Cytoplasmic segment spans residues 569–592; that stretch reads EYFSPVGYNRNLAQGKDPHGPSFT. The interval 591–612 is pore-forming; sequence FTIGKAVWLLWGLVFNNSVPVQ. The discontinuously helical intramembrane region spans 593-612; sequence IGKAVWLLWGLVFNNSVPVQ. Topologically, residues 613–617 are cytoplasmic; the sequence is NPKGT. A helical membrane pass occupies residues 618–637; sequence TSKIIVSIWAFFAVIFLASY. Over 638–808 the chain is Extracellular; the sequence is TANLAAFMIQ…VMSSQLDIDN (171 aa). Asn679 carries N-linked (GlcNAc...) asparagine glycosylation. Ser681, Thr682, and Asp723 together coordinate L-glutamate. The cysteines at positions 737 and 792 are disulfide-linked. A helical transmembrane segment spans residues 809-829; that stretch reads MAGVFYMLAAAMALSLITFVW. The Cytoplasmic segment spans residues 830 to 1451; it reads EHLFYWKLRF…KKMPSLESDV (622 aa). Polar residues predominate over residues 1011-1022; sequence TLRQTQGSVNEN. Disordered regions lie at residues 1011 to 1080 and 1100 to 1165; these read TLRQ…VSAK and NRDK…GRLP. Basic and acidic residues-rich tracts occupy residues 1055–1073, 1100–1113, and 1138–1149; these read CHID…DNLK, NRDK…DKEP, and YQDHNDNYRKTE.

The protein belongs to the glutamate-gated ion channel (TC 1.A.10.1) family. Heterotetramer. Forms heterotetrameric channels composed of two GluN1/zeta subunits (GRIN1), and two identical GluN2/epsilon subunits (GRIN2A, GRIN2B, GRIN2C or GRIN2D) or GluN3 subunits (GRIN3A or GRIN3B) (in vitro). In vivo, the subunit composition may depend on the expression levels of the different subunits.

It localises to the cell membrane. It is found in the postsynaptic cell membrane. It carries out the reaction Ca(2+)(in) = Ca(2+)(out). It catalyses the reaction Na(+)(in) = Na(+)(out). The catalysed reaction is K(+)(in) = K(+)(out). Component of N-methyl-D-aspartate (NMDA) receptors (NMDARs) that function as heterotetrameric, ligand-gated cation channels with high calcium permeability and voltage-dependent block by Mg(2+). MDARs participate in synaptic plasticity. Channel activation requires binding of the neurotransmitter L-glutamate to the GluN2 subunit, glycine binding to the GluN1 subunit, plus membrane depolarization to eliminate channel inhibition by Mg(2+). NMDARs mediate simultaneously the potasium efflux and the influx of calcium and sodium. Each GluN2 subunit confers differential attributes to channel properties, including activation, deactivation and desensitization kinetics, pH sensitivity, Ca2(+) permeability, and binding to allosteric modulators. Plays a role in dendritic branching in brain neurons and in synaptic plasticity. This is Glutamate receptor ionotropic, NMDA 2A from Xenopus laevis (African clawed frog).